Reading from the N-terminus, the 105-residue chain is Small ribosomal subunit protein uS10 (105 aa).

This sequence belongs to the universal ribosomal protein uS10 family. In terms of assembly, part of the 30S ribosomal subunit.

In terms of biological role, involved in the binding of tRNA to the ribosomes. In Rickettsia felis (strain ATCC VR-1525 / URRWXCal2) (Rickettsia azadi), this protein is Small ribosomal subunit protein uS10.